The chain runs to 215 residues: 3,4-dihydroxy-2-butanone 4-phosphate synthase (215 aa).

Residues 38 to 39 (RE), Asp-43, 151 to 155 (RRGHT), and Glu-175 each bind D-ribulose 5-phosphate. Glu-39 contacts Mg(2+). His-154 is a binding site for Mg(2+).

It belongs to the DHBP synthase family. In terms of assembly, homodimer. Mg(2+) serves as cofactor. The cofactor is Mn(2+).

It carries out the reaction D-ribulose 5-phosphate = (2S)-2-hydroxy-3-oxobutyl phosphate + formate + H(+). The protein operates within cofactor biosynthesis; riboflavin biosynthesis; 2-hydroxy-3-oxobutyl phosphate from D-ribulose 5-phosphate: step 1/1. Catalyzes the conversion of D-ribulose 5-phosphate to formate and 3,4-dihydroxy-2-butanone 4-phosphate. This is 3,4-dihydroxy-2-butanone 4-phosphate synthase from Haemophilus influenzae (strain 86-028NP).